We begin with the raw amino-acid sequence, 165 residues long: Large ribosomal subunit protein uL10 (165 aa).

The protein belongs to the universal ribosomal protein uL10 family. Part of the ribosomal stalk of the 50S ribosomal subunit. The N-terminus interacts with L11 and the large rRNA to form the base of the stalk. The C-terminus forms an elongated spine to which L12 dimers bind in a sequential fashion forming a multimeric L10(L12)X complex.

In terms of biological role, forms part of the ribosomal stalk, playing a central role in the interaction of the ribosome with GTP-bound translation factors. In Edwardsiella ictaluri (strain 93-146), this protein is Large ribosomal subunit protein uL10.